A 186-amino-acid polypeptide reads, in one-letter code: Pyridoxal 5'-phosphate synthase subunit PdxT (186 aa).

46-48 contacts L-glutamine; sequence GES. Catalysis depends on Cys75, which acts as the Nucleophile. Residues Arg101 and 127-128 each bind L-glutamine; that span reads IR. Residues His164 and Glu166 each act as charge relay system in the active site.

Belongs to the glutaminase PdxT/SNO family. As to quaternary structure, in the presence of PdxS, forms a dodecamer of heterodimers. Only shows activity in the heterodimer.

The enzyme catalyses aldehydo-D-ribose 5-phosphate + D-glyceraldehyde 3-phosphate + L-glutamine = pyridoxal 5'-phosphate + L-glutamate + phosphate + 3 H2O + H(+). It catalyses the reaction L-glutamine + H2O = L-glutamate + NH4(+). Its pathway is cofactor biosynthesis; pyridoxal 5'-phosphate biosynthesis. In terms of biological role, catalyzes the hydrolysis of glutamine to glutamate and ammonia as part of the biosynthesis of pyridoxal 5'-phosphate. The resulting ammonia molecule is channeled to the active site of PdxS. This chain is Pyridoxal 5'-phosphate synthase subunit PdxT, found in Methanococcus aeolicus (strain ATCC BAA-1280 / DSM 17508 / OCM 812 / Nankai-3).